Consider the following 463-residue polypeptide: Exodeoxyribonuclease 7 large subunit (463 aa).

Belongs to the XseA family. In terms of assembly, heterooligomer composed of large and small subunits.

The protein resides in the cytoplasm. It catalyses the reaction Exonucleolytic cleavage in either 5'- to 3'- or 3'- to 5'-direction to yield nucleoside 5'-phosphates.. Bidirectionally degrades single-stranded DNA into large acid-insoluble oligonucleotides, which are then degraded further into small acid-soluble oligonucleotides. This is Exodeoxyribonuclease 7 large subunit from Bordetella bronchiseptica (strain ATCC BAA-588 / NCTC 13252 / RB50) (Alcaligenes bronchisepticus).